We begin with the raw amino-acid sequence, 430 residues long: UDP-N-acetylglucosamine 1-carboxyvinyltransferase 1 (430 aa).

22 to 23 (KN) contributes to the phosphoenolpyruvate binding site. Arginine 93 is a binding site for UDP-N-acetyl-alpha-D-glucosamine. Cysteine 117 functions as the Proton donor in the catalytic mechanism. Cysteine 117 bears the 2-(S-cysteinyl)pyruvic acid O-phosphothioketal mark. UDP-N-acetyl-alpha-D-glucosamine contacts are provided by residues 122 to 126 (RPVDL), aspartate 305, and valine 327.

Belongs to the EPSP synthase family. MurA subfamily.

It is found in the cytoplasm. It catalyses the reaction phosphoenolpyruvate + UDP-N-acetyl-alpha-D-glucosamine = UDP-N-acetyl-3-O-(1-carboxyvinyl)-alpha-D-glucosamine + phosphate. It functions in the pathway cell wall biogenesis; peptidoglycan biosynthesis. Functionally, cell wall formation. Adds enolpyruvyl to UDP-N-acetylglucosamine. The chain is UDP-N-acetylglucosamine 1-carboxyvinyltransferase 1 from Listeria innocua serovar 6a (strain ATCC BAA-680 / CLIP 11262).